The primary structure comprises 500 residues: MSPAPPPCGFAEAESTNTKSAPKFRSACNACHEVKLKCLGGQPCARCRNKQVECVYSHAARIGKPKGSRNKKTLERLRQAKAMSRPEETQGEETTSLTAVDASQAINCRALSGSTRRDSSPLPPPHSDTDSAEGGAEEELLDQEERDEAEKPPLVENPPNLNPLEQISPPREDFLDLLAHSSLLNNTQHDLQHPTADMVPDGLAGFPHASTSAADDLSWMTSPTKSLLSTTFPAIEDDLQDLQDPFLCSSWRSACLPPSSSRSSFHFPRFNHFAEDTMGLEYASGMDATRSLGDPPHAMARAGSFSTSGPGSSQEGSHFLSSRHSQSSGMYQPVPKRPSCSCLKLQASALCRIHLVDRSHADMRGDTVLATASTILDSCNALILCPSCATDYKFLLLAIMTVRILLCWLRGLSATRTQNDNANMKLTLGEYEISGEEEAIIKNMLVSRALEKVKIAVRRLRERVNSITIQEVGNCSESTQRWDLTYIRMCLDHMEKQVGC.

Positions 28–54 (CNACHEVKLKCLGGQPCARCRNKQVEC) form a DNA-binding region, zn(2)-C6 fungal-type. A compositionally biased stretch (basic and acidic residues) spans 79-88 (QAKAMSRPEE). Disordered regions lie at residues 79–168 (QAKA…EQIS) and 302–332 (AGSF…GMYQ). Residues 135 to 147 (GAEEELLDQEERD) show a composition bias toward acidic residues. A compositionally biased stretch (low complexity) spans 154 to 165 (LVENPPNLNPLE). Over residues 304–316 (SFSTSGPGSSQEG) the composition is skewed to polar residues. The segment covering 317–328 (SHFLSSRHSQSS) has biased composition (low complexity).

Its subcellular location is the nucleus. Functionally, transcription factor that regulates sirodesmin production and contributes to virulence. Probably binds to the consensus motif TCGGN(3)CCGA found in the promoters of sirT, sirP, sirO, sirN, sirP, sirB, sirR, sirJ and sirQ. This is C6 finger domain transcription factor sirZ from Leptosphaeria maculans (Blackleg fungus).